Here is a 308-residue protein sequence, read N- to C-terminus: UDP-N-acetylenolpyruvoylglucosamine reductase (308 aa).

An FAD-binding PCMH-type domain is found at 33-197 (TGGNADFYLS…LEASFNLAPG (165 aa)). The active site involves arginine 176. Catalysis depends on serine 226, which acts as the Proton donor. Residue glutamate 296 is part of the active site.

Belongs to the MurB family. The cofactor is FAD.

Its subcellular location is the cytoplasm. It catalyses the reaction UDP-N-acetyl-alpha-D-muramate + NADP(+) = UDP-N-acetyl-3-O-(1-carboxyvinyl)-alpha-D-glucosamine + NADPH + H(+). Its pathway is cell wall biogenesis; peptidoglycan biosynthesis. Cell wall formation. This is UDP-N-acetylenolpyruvoylglucosamine reductase from Staphylococcus carnosus (strain TM300).